The sequence spans 171 residues: Co-chaperone protein HscB homolog (171 aa).

The 73-residue stretch at 3–75 (SHFALFDLEP…SQRARYLLSL (73 aa)) folds into the J domain.

This sequence belongs to the HscB family. In terms of assembly, interacts with HscA and stimulates its ATPase activity.

Functionally, co-chaperone involved in the maturation of iron-sulfur cluster-containing proteins. Seems to help targeting proteins to be folded toward HscA. In Azotobacter vinelandii, this protein is Co-chaperone protein HscB homolog.